A 443-amino-acid polypeptide reads, in one-letter code: 5-methylthioadenosine/S-adenosylhomocysteine deaminase 1 (443 aa).

Zn(2+) is bound by residues His-69 and His-71. Residues Glu-98 and His-191 each contribute to the substrate site. Position 218 (His-218) interacts with Zn(2+). Residues Glu-221 and Asp-306 each coordinate substrate. Residue Asp-306 participates in Zn(2+) binding.

It belongs to the metallo-dependent hydrolases superfamily. MTA/SAH deaminase family. Zn(2+) is required as a cofactor.

The catalysed reaction is S-adenosyl-L-homocysteine + H2O + H(+) = S-inosyl-L-homocysteine + NH4(+). It carries out the reaction S-methyl-5'-thioadenosine + H2O + H(+) = S-methyl-5'-thioinosine + NH4(+). Its function is as follows. Catalyzes the deamination of 5-methylthioadenosine and S-adenosyl-L-homocysteine into 5-methylthioinosine and S-inosyl-L-homocysteine, respectively. Is also able to deaminate adenosine. In Syntrophus aciditrophicus (strain SB), this protein is 5-methylthioadenosine/S-adenosylhomocysteine deaminase 1.